A 375-amino-acid polypeptide reads, in one-letter code: Chaperone protein DnaJ (375 aa).

One can recognise a J domain in the interval 5–70; the sequence is DFYETLGVAK…QKRAAYDRYG (66 aa). The CR-type zinc-finger motif lies at 136 to 214; the sequence is GKTAQIRVPT…CHGQGRVTEE (79 aa). Zn(2+)-binding residues include Cys149, Cys152, Cys166, Cys169, Cys188, Cys191, Cys202, and Cys205. CXXCXGXG motif repeat units lie at residues 149–156, 166–173, 188–195, and 202–209; these read CDVCSGSG, CGTCQGTG, CPTCHGRG, and CPKCHGQG.

It belongs to the DnaJ family. As to quaternary structure, homodimer. Zn(2+) serves as cofactor.

It localises to the cytoplasm. Functionally, participates actively in the response to hyperosmotic and heat shock by preventing the aggregation of stress-denatured proteins and by disaggregating proteins, also in an autonomous, DnaK-independent fashion. Unfolded proteins bind initially to DnaJ; upon interaction with the DnaJ-bound protein, DnaK hydrolyzes its bound ATP, resulting in the formation of a stable complex. GrpE releases ADP from DnaK; ATP binding to DnaK triggers the release of the substrate protein, thus completing the reaction cycle. Several rounds of ATP-dependent interactions between DnaJ, DnaK and GrpE are required for fully efficient folding. Also involved, together with DnaK and GrpE, in the DNA replication of plasmids through activation of initiation proteins. This chain is Chaperone protein DnaJ, found in Rhizobium etli (strain ATCC 51251 / DSM 11541 / JCM 21823 / NBRC 15573 / CFN 42).